Reading from the N-terminus, the 129-residue chain is Small ribosomal subunit protein uS11 (129 aa).

The protein belongs to the universal ribosomal protein uS11 family. In terms of assembly, part of the 30S ribosomal subunit. Interacts with proteins S7 and S18. Binds to IF-3.

Functionally, located on the platform of the 30S subunit, it bridges several disparate RNA helices of the 16S rRNA. Forms part of the Shine-Dalgarno cleft in the 70S ribosome. This is Small ribosomal subunit protein uS11 from Roseobacter denitrificans (strain ATCC 33942 / OCh 114) (Erythrobacter sp. (strain OCh 114)).